The sequence spans 434 residues: Oxysterol-binding protein homolog 4 (434 aa).

The segment at 7 to 29 (SSSWTSFLKSIASFNGDLSSLSA) is ALPS motif. Positions 16-366 (SIASFNGDLS…WQRRWFKDFD (351 aa)) are OSBP-related domain (ORD). An a 1,2-diacyl-sn-glycero-3-phospho-(1D-myo-inositol 4-phosphate)-binding site is contributed by 24–29 (LSSLSA). Glutamine 96 serves as a coordination point for 20-hydroxycholesterol. Glutamine 96 serves as a coordination point for 25-hydroxycholesterol. 2 residues coordinate 7beta-hydroxycholesterol: glutamine 96 and arginine 100. Cholesterol is bound at residue glutamine 96. Residue glutamine 96 participates in ergosterol binding. Residues 109 to 112 (KPLN), 143 to 144 (HH), lysine 336, glutamate 340, and arginine 344 contribute to the a 1,2-diacyl-sn-glycero-3-phospho-(1D-myo-inositol 4-phosphate) site. Residue threonine 370 is modified to Phosphothreonine. Position 389 is a phosphoserine (serine 389).

It belongs to the OSBP family.

The protein resides in the cytoplasm. The protein localises to the golgi apparatus membrane. Functionally, lipid transport protein (LTP) involved in non-vesicular transfer of lipids between membranes. Functions in phosphoinositide-coupled directional transport of various lipids by carrying the lipid molecule in a hydrophobic pocket and transferring it between membranes through the cytosol. Involved in maintenance of intracellular sterol distribution and homeostasis. Involved in lipid countertransport between the Golgi complex and membranes of the endoplasmic reticulum. Specifically exchanges sterol with phosphatidylinositol 4-phosphate (PI4P), delivering sterol to the Golgi in exchange for PI4P, which is delivered to the ER-localized PI4P phosphatase SAC1 for degradation. Thus, by maintaining a PI4P gradient at the ER/Golgi interface, SAC1 may drive PS transport. Displays a similar affinity for PI4P and sterols. Binds sterol and PI4P in a mutually exclusive manner. Involved in ergosterol transport from the plasma membrane (PM) to the ER. Mediates sterol transport from the ER to mitochondria. Involved in the negative regulation of Golgi-derived transport vesicle biogenesis. Plays a role in the positive regulation of vesicular transport of ceramide from the ER to the Golgi, negatively regulating COPII-mediated ER export of cargos. This is Oxysterol-binding protein homolog 4 from Saccharomyces cerevisiae (strain ATCC 204508 / S288c) (Baker's yeast).